A 305-amino-acid polypeptide reads, in one-letter code: MTDPRRTEQVHPDYADLDTLAPDALIAALADDQLGAVRAVQAAAPQLTAALNAAVPQLERGGRLVYVGAGTSGRLGVLDATELTPTFSWPPERAVPLIAGGERAIRQAVEGAEDDEAAGERDVQAVNIGPDDVLIAVAASGTTPYVLGAARSGRAAGALTVGLANNPGAPLLAAVDCPVLLDTGPEIISGSTRLKAGTAQKIALNTLSSALMVRLGKLYGNLMVDVRATNAKLEDRARRLVQHATGADADAAQAALSECGGSVKTALVMLKLGLGAQEAAQRLEGAGGHARQVLGEGEALGTSAS.

An SIS domain is found at 54–217; that stretch reads AVPQLERGGR…SSALMVRLGK (164 aa). Glutamate 82 acts as the Proton donor in catalysis. Glutamate 113 is a catalytic residue.

It belongs to the GCKR-like family. MurNAc-6-P etherase subfamily. As to quaternary structure, homodimer.

It carries out the reaction N-acetyl-D-muramate 6-phosphate + H2O = N-acetyl-D-glucosamine 6-phosphate + (R)-lactate. Its pathway is amino-sugar metabolism; N-acetylmuramate degradation. Its function is as follows. Specifically catalyzes the cleavage of the D-lactyl ether substituent of MurNAc 6-phosphate, producing GlcNAc 6-phosphate and D-lactate. The polypeptide is N-acetylmuramic acid 6-phosphate etherase (Deinococcus radiodurans (strain ATCC 13939 / DSM 20539 / JCM 16871 / CCUG 27074 / LMG 4051 / NBRC 15346 / NCIMB 9279 / VKM B-1422 / R1)).